Consider the following 322-residue polypeptide: Sideroflexin-1 (322 aa).

Ser2 bears the N-acetylserine mark. The Mitochondrial matrix segment spans residues 2-102 (SGELPPNINI…MSAQVPMNMT (101 aa)). A helical transmembrane segment spans residues 103–120 (ITGCMMTFYRTTPAVLFW). At 121-146 (QWINQSFNAVVNYTNRSGDAPLTVNE) the chain is on the mitochondrial intermembrane side. Residues 147-167 (LGTAYVSATTGAVATALGLNA) form a helical membrane-spanning segment. Residues 168–174 (LTKHVSP) lie on the Mitochondrial matrix side of the membrane. The helical transmembrane segment at 175-195 (LIGRFVPFAAVAAANCINIPL) threads the bilayer. The Mitochondrial intermembrane segment spans residues 196–228 (MRQRELKVGIPVTDENGNRLGESANAAKQAITQ). The helical transmembrane segment at 229 to 249 (VVVSRILMAAPGMAIPPFIMN) threads the bilayer. Residues 250–266 (TLEKKAFLKRFPWMSAP) lie on the Mitochondrial matrix side of the membrane. Residues 267–287 (VQVGIVGFCLVFATPLCCALF) traverse the membrane as a helical segment. Residues 288–322 (PQKSSMSVTSLEAELQARIRETYPELRRVYFNKGL) lie on the Mitochondrial intermembrane side of the membrane.

The protein belongs to the sideroflexin family.

It is found in the mitochondrion inner membrane. It catalyses the reaction L-serine(in) = L-serine(out). The enzyme catalyses L-alanine(in) = L-alanine(out). The catalysed reaction is L-cysteine(in) = L-cysteine(out). In terms of biological role, amino acid transporter importing serine, an essential substrate of the mitochondrial branch of the one-carbon pathway, into mitochondria. Mitochondrial serine is then converted to glycine and formate, which exits to the cytosol where it is used to generate the charged folates that serve as one-carbon donors. May also transport other amino acids including alanine and cysteine. The polypeptide is Sideroflexin-1 (SFXN1) (Bos taurus (Bovine)).